A 317-amino-acid chain; its full sequence is WSCD family member CG9164 (317 aa).

The helical transmembrane segment at 8-28 (FFGVSATIIIYIGGVLFLSMN) threads the bilayer. Residues N151, N227, and N233 are each glycosylated (N-linked (GlcNAc...) asparagine).

The protein belongs to the WSCD family.

The protein localises to the membrane. The polypeptide is WSCD family member CG9164 (Drosophila melanogaster (Fruit fly)).